A 191-amino-acid polypeptide reads, in one-letter code: Programmed cell death protein 6 (191 aa).

Residue A2 is modified to N-acetylalanine. 5 consecutive EF-hand domains span residues 23-58 (PDQS…GTWT), 59-89 (PFNP…TGVW), 90-125 (KYIT…FGYR), 126-161 (LSDQ…LQRL), and 162-191 (TDIF…FSIV). Ca(2+)-binding residues include D36, D38, S40, V42, and E47. Ca(2+) is bound by residues D103, D105, S107, M109, and E114. Mg(2+) is bound by residues D169, D171, D173, and W175.

In terms of assembly, homodimer and heterodimer; heterodimerizes (via the EF-hand 5) with PEF1. Isoform 1 and isoform 2 self-associate; probably forming homodimers. Interacts with CPNE4 (via VWFA domain). Interacts with PDCD6IP; the interaction is calcium-dependent. Interacts with RBM22. Interacts with PLSCR4. Interacts with ANXA7 and TSG101. Interacts with DAPK1. Interacts with SEC31A; the interaction is calcium-dependent and promotes monoubiquitination of SEC31A. Interacts with ANXA11 (via N-terminus); the interaction is calcium-dependent. Interacts with PLSCR3 (via N-terminus); the interaction is calcium-dependent. Interacts with MCOLN1; the interaction is calcium-dependent. Interacts with KDR; the interaction is calcium-dependent. Interacts with HEBP2; the interaction is calcium-dependent. Interacts with TFG. Isoform 1: Interacts with SHISA5, leading to stabilize it. Isoform 2: Does not interact with SHISA5. Isoform 2: Does not interact with PDCD6IP, TSG101, ANXA7 and ANXA11.

It localises to the endoplasmic reticulum membrane. The protein resides in the cytoplasmic vesicle. It is found in the COPII-coated vesicle membrane. Its subcellular location is the cytoplasm. The protein localises to the nucleus. It localises to the endosome. Calcium sensor that plays a key role in processes such as endoplasmic reticulum (ER)-Golgi vesicular transport, endosomal biogenesis or membrane repair. Acts as an adapter that bridges unrelated proteins or stabilizes weak protein-protein complexes in response to calcium: calcium-binding triggers exposure of apolar surface, promoting interaction with different sets of proteins thanks to 3 different hydrophobic pockets, leading to translocation to membranes. Involved in ER-Golgi transport. Regulates ER-Golgi transport by promoting the association between PDCD6IP and TSG101, thereby bridging together the ESCRT-III and ESCRT-I complexes. Together with PEF1, acts as a calcium-dependent adapter for the BCR(KLHL12) complex, a complex involved in ER-Golgi transport by regulating the size of COPII coats. In response to cytosolic calcium increase, the heterodimer formed with PEF1 interacts with, and bridges together the BCR(KLHL12) complex and SEC31 (SEC31A or SEC31B), promoting monoubiquitination of SEC31 and subsequent collagen export, which is required for neural crest specification. Involved in the regulation of the distribution and function of MCOLN1 in the endosomal pathway. Promotes localization and polymerization of TFG at endoplasmic reticulum exit site. Required for T-cell receptor-, Fas-, and glucocorticoid-induced apoptosis. May mediate Ca(2+)-regulated signals along the death pathway: interaction with DAPK1 can accelerate apoptotic cell death by increasing caspase-3 activity. Its role in apoptosis may however be indirect, as suggested by knockout experiments. May inhibit KDR/VEGFR2-dependent angiogenesis; the function involves inhibition of VEGF-induced phosphorylation of the Akt signaling pathway. Its function is as follows. Has a lower Ca(2+) affinity than isoform 1. This chain is Programmed cell death protein 6, found in Rattus norvegicus (Rat).